Reading from the N-terminus, the 231-residue chain is Phosphatidylserine decarboxylase proenzyme (231 aa).

Residue Ser188 is the Schiff-base intermediate with substrate; via pyruvic acid of the active site. Residue Ser188 is modified to Pyruvic acid (Ser); by autocatalysis.

This sequence belongs to the phosphatidylserine decarboxylase family. PSD-A subfamily. In terms of assembly, heterodimer of a large membrane-associated beta subunit and a small pyruvoyl-containing alpha subunit. Pyruvate serves as cofactor. In terms of processing, is synthesized initially as an inactive proenzyme. Formation of the active enzyme involves a self-maturation process in which the active site pyruvoyl group is generated from an internal serine residue via an autocatalytic post-translational modification. Two non-identical subunits are generated from the proenzyme in this reaction, and the pyruvate is formed at the N-terminus of the alpha chain, which is derived from the carboxyl end of the proenzyme. The post-translation cleavage follows an unusual pathway, termed non-hydrolytic serinolysis, in which the side chain hydroxyl group of the serine supplies its oxygen atom to form the C-terminus of the beta chain, while the remainder of the serine residue undergoes an oxidative deamination to produce ammonia and the pyruvoyl prosthetic group on the alpha chain.

The protein resides in the cell membrane. The catalysed reaction is a 1,2-diacyl-sn-glycero-3-phospho-L-serine + H(+) = a 1,2-diacyl-sn-glycero-3-phosphoethanolamine + CO2. The protein operates within phospholipid metabolism; phosphatidylethanolamine biosynthesis; phosphatidylethanolamine from CDP-diacylglycerol: step 2/2. In terms of biological role, catalyzes the formation of phosphatidylethanolamine (PtdEtn) from phosphatidylserine (PtdSer). The chain is Phosphatidylserine decarboxylase proenzyme from Rickettsia akari (strain Hartford).